Here is a 92-residue protein sequence, read N- to C-terminus: Small ribosomal subunit protein bS18 (92 aa).

Belongs to the bacterial ribosomal protein bS18 family. As to quaternary structure, part of the 30S ribosomal subunit. Forms a tight heterodimer with protein bS6.

In terms of biological role, binds as a heterodimer with protein bS6 to the central domain of the 16S rRNA, where it helps stabilize the platform of the 30S subunit. This chain is Small ribosomal subunit protein bS18, found in Chlorobium chlorochromatii (strain CaD3).